Reading from the N-terminus, the 188-residue chain is Photosystem I assembly protein Ycf4 (188 aa).

Helical transmembrane passes span 26 to 48 and 63 to 85; these read FFWAGISTIGGVGFLLAGLSSYF and FIPQGVALLFYGVAGSTVAGYLW.

The protein belongs to the Ycf4 family.

It localises to the cellular thylakoid membrane. Its function is as follows. Seems to be required for the assembly of the photosystem I complex. The protein is Photosystem I assembly protein Ycf4 of Synechocystis sp. (strain ATCC 27184 / PCC 6803 / Kazusa).